The primary structure comprises 97 residues: Protein RnfH (97 aa).

It belongs to the UPF0125 (RnfH) family.

This Paramagnetospirillum magneticum (strain ATCC 700264 / AMB-1) (Magnetospirillum magneticum) protein is Protein RnfH.